A 220-amino-acid chain; its full sequence is Putative DNA repair glycosylase MJ1434 (220 aa).

Cys-202, Cys-208, Cys-211, and Cys-217 together coordinate [4Fe-4S] cluster.

This sequence belongs to the Nth/MutY family. [4Fe-4S] cluster is required as a cofactor.

The sequence is that of Putative DNA repair glycosylase MJ1434 from Methanocaldococcus jannaschii (strain ATCC 43067 / DSM 2661 / JAL-1 / JCM 10045 / NBRC 100440) (Methanococcus jannaschii).